The sequence spans 425 residues: SWI/SNF and RSC complexes subunit ssr3 (425 aa).

Residues 1 to 16 (MSNNSRLPENGVQSGN) are compositionally biased toward polar residues. The segment at 1-23 (MSNNSRLPENGVQSGNGEDAELK) is disordered. Positions 201–278 (EHPERYKLSK…PELMNRFLEP (78 aa)) constitute an SWIB/MDM2 domain.

The protein belongs to the SMARCD family. In terms of assembly, component of the RSC complex composed of at least arp9, arp42, rsc1, rsc4, rsc7, rsc9, rsc58, sfh1, snf21, ssr1, ssr2, ssr3 and ssr4. The complex interacts with histone and histone variant components of centromeric chromatin. Component of the SWI/SNF global transcription activator complex composed of at least arp9, arp42, snf5, snf22, snf30, sbf59, sol1, ssr1, ssr2, ssr3, ssr4 and tfg3.

The protein resides in the cytoplasm. The protein localises to the nucleus. In terms of biological role, component of the chromatin structure remodeling complex (RSC), which is involved in transcription regulation and nucleosome positioning. Controls particularly membrane and organelle development genes. Part of the SWI/SNF complex, an ATP-dependent chromatin remodeling complex, required for the positive and negative regulation of gene expression of a large number of genes. It changes chromatin structure by altering DNA-histone contacts within a nucleosome, leading eventually to a change in nucleosome position, thus facilitating or repressing binding of gene-specific transcription factors. The chain is SWI/SNF and RSC complexes subunit ssr3 (ssr3) from Schizosaccharomyces pombe (strain 972 / ATCC 24843) (Fission yeast).